We begin with the raw amino-acid sequence, 891 residues long: Dynein axonemal intermediate chain 3 (891 aa).

The span at 1–17 (MAPKQKKKTSRGKKRLK) shows a compositional bias: basic residues. The disordered stretch occupies residues 1–22 (MAPKQKKKTSRGKKRLKPVLAA). WD repeat units follow at residues 395-435 (ESPD…DRIE), 477-533 (GHKK…PLTP), 670-709 (IHDG…GPLL), and 713-753 (CAPK…HEPA). A coiled-coil region spans residues 818–861 (LEYVEQRKKIREQEKKEMELEMAKKKVKTYQKSKEQMQAELKMD).

In terms of assembly, interacts with ACTR2; this interaction reduces binding of the Arp2/3 complex to the VCA domain of nucleation promoting factors. Part of the multisubunit axonemal dynein complex formed at least of two heavy chains and a number of intermediate and light chains. Found in a associated with the catalytic heavy chain DNAH2, the intermediate chain DNAI4, and the light chain DYNLT1.

It is found in the cytoplasm. In terms of biological role, acts as a negative regulator of cell migration, invasion, and metastasis downstream of p53/TP53, through inhibition of Arp2/3 complex-mediated actin polymerization. Via its association with the multisubunit axonemal dynein complex, is potentially involved in the regulation of cilia function. May play a role in osteogenesis of dental tissue-derived mesenchymal stem cells. In Homo sapiens (Human), this protein is Dynein axonemal intermediate chain 3.